Here is a 219-residue protein sequence, read N- to C-terminus: Guanylate kinase (219 aa).

In terms of domain architecture, Guanylate kinase-like spans 15-194 (GLMFVLSSPS…AFAEVHSILK (180 aa)). 22–29 (SPSGAGKT) contributes to the ATP binding site.

It belongs to the guanylate kinase family.

The protein resides in the cytoplasm. It carries out the reaction GMP + ATP = GDP + ADP. In terms of biological role, essential for recycling GMP and indirectly, cGMP. The sequence is that of Guanylate kinase from Rhodopseudomonas palustris (strain BisB18).